A 959-amino-acid polypeptide reads, in one-letter code: Transcription factor 1 (959 aa).

C2H2-type zinc fingers lie at residues 2–24 (VFCT…ILTH) and 30–52 (FKCF…YTVH). The segment at residues 79–105 (CSNCAKTKTKCDKKFPCSRCASRNLRC) is a DNA-binding region (zn(2)-C6 fungal-type). The segment at 154–226 (PTGHVEESSK…SFPGFDDYNQ (73 aa)) is disordered. Low complexity predominate over residues 163–178 (KSSSPSGSPTSISHNS).

It localises to the nucleus. Its function is as follows. Elsinochromes biosynthesis cluster-specific transcription factor that positively regulates the expression of cluster genes including RDT1, PKS1, PRF1 and HP1, and subsequent elsinochromes production. This Elsinoe fawcettii (Citrus scab fungus) protein is Transcription factor 1.